We begin with the raw amino-acid sequence, 348 residues long: Propane 2-monooxygenase, reductase component (348 aa).

One can recognise a 2Fe-2S ferredoxin-type domain in the interval 5–95 (HKINFEPVDI…DCTIELLNFD (91 aa)). Residues cysteine 39, cysteine 44, cysteine 47, and cysteine 79 each coordinate [2Fe-2S] cluster. The region spanning 105–206 (IQDVRTEVLA…TGPYGSFTLK (102 aa)) is the FAD-binding FR-type domain.

It belongs to the bacterial ring-hydroxylating dioxygenase ferredoxin reductase family. In terms of assembly, the propane 2-monooxygenase multicomponent enzyme system is composed of an electron transfer component and a monooxygenase component interacting with the effector protein MimD. The electron transfer component is composed of a reductase (MimB), and the monooxygenase component is formed by a large subunit (MimA) and a small subunit (MimC). It depends on FAD as a cofactor. [2Fe-2S] cluster serves as cofactor.

Functionally, reductase component of the propane 2-monooxygenase multicomponent enzyme system which is involved in the degradation of propane via the O2-dependent hydroxylation of propane. Reductase catalyzes the transfer of electrons from NADH or NADPH to monooxygenase. The protein is Propane 2-monooxygenase, reductase component of Mycolicibacterium goodii (Mycobacterium goodii).